The chain runs to 61 residues: Large ribosomal subunit protein uL30 (61 aa).

The protein belongs to the universal ribosomal protein uL30 family. In terms of assembly, part of the 50S ribosomal subunit.

The sequence is that of Large ribosomal subunit protein uL30 from Teredinibacter turnerae (strain ATCC 39867 / T7901).